The primary structure comprises 146 residues: Single-stranded DNA-binding protein 1-A, mitochondrial (146 aa).

The transit peptide at 1–17 (MFHRPALQVFRQFARCQ) directs the protein to the mitochondrion. In terms of domain architecture, SSB spans 28 to 140 (INKVQLLGRV…IIADNIIFLS (113 aa)).

In terms of assembly, homotetramer.

Its subcellular location is the mitochondrion. It localises to the mitochondrion matrix. It is found in the mitochondrion nucleoid. In terms of biological role, binds preferentially and cooperatively to pyrimidine rich single-stranded DNA (ss-DNA). Required to maintain the copy number of mitochondrial DNA (mtDNA) and plays crucial roles during mtDNA replication that stimulate activity of the DNA polymerase at the replication fork. May also function in mtDNA repair. The sequence is that of Single-stranded DNA-binding protein 1-A, mitochondrial (ssbp1-a) from Xenopus laevis (African clawed frog).